A 217-amino-acid polypeptide reads, in one-letter code: Oxygen regulatory protein NreC (217 aa).

The Response regulatory domain occupies 2-119 (KIVIADDHAV…QLISAVRTVY (118 aa)). 4-aspartylphosphate is present on Asp53. In terms of domain architecture, HTH luxR-type spans 148–213 (TNDPFRILSK…ELVEYALKKK (66 aa)). The segment at residues 172 to 191 (NKEIAEKLFVSVKTVEAHKT) is a DNA-binding region (H-T-H motif).

Phosphorylated by NreB.

It is found in the cytoplasm. In terms of biological role, member of the two-component regulatory system NreB/NreC involved in the control of dissimilatory nitrate/nitrite reduction in response to oxygen. Phosphorylated NreC binds to a GC-rich palindromic sequence at the promoters of the nitrate (narGHJI) and nitrite (nir) reductase operons, as well as the putative nitrate transporter gene narT, and activates their expression. This is Oxygen regulatory protein NreC (nreC) from Staphylococcus carnosus (strain TM300).